The sequence spans 192 residues: Fe/S biogenesis protein NfuA (192 aa).

Cys149 and Cys152 together coordinate [4Fe-4S] cluster.

It belongs to the NfuA family. In terms of assembly, homodimer. [4Fe-4S] cluster is required as a cofactor.

In terms of biological role, involved in iron-sulfur cluster biogenesis. Binds a 4Fe-4S cluster, can transfer this cluster to apoproteins, and thereby intervenes in the maturation of Fe/S proteins. Could also act as a scaffold/chaperone for damaged Fe/S proteins. This Shewanella piezotolerans (strain WP3 / JCM 13877) protein is Fe/S biogenesis protein NfuA.